Consider the following 85-residue polypeptide: Anti-neuroexcitation peptide 3 (85 aa).

Positions 1-21 (MKLSLLLVISASMLIDGLVNA) are cleaved as a signal peptide. Residues 22-82 (DGYIRGSNGC…TWKSESNTCG (61 aa)) form the LCN-type CS-alpha/beta domain. Intrachain disulfides connect C31-C81, C35-C56, C42-C63, and C46-C65.

This sequence belongs to the long (4 C-C) scorpion toxin superfamily. Sodium channel inhibitor family. Beta subfamily. In terms of tissue distribution, expressed by the venom gland.

The protein localises to the secreted. Functionally, binds to sodium channels (Nav) and inhibits them. Recombinant ANEP delays the convulsion seizure of model animals by 18% and shows anti-neuroexcitatory activity. In Olivierus martensii (Manchurian scorpion), this protein is Anti-neuroexcitation peptide 3.